A 286-amino-acid polypeptide reads, in one-letter code: Shikimate dehydrogenase (NADP(+)) (286 aa).

Residues 19–21 (SVS) and Thr66 each bind shikimate. Lys70 serves as the catalytic Proton acceptor. The shikimate site is built by Asn91 and Asp106. NADP(+) is bound by residues 130 to 134 (GAGGS) and Ala225. Tyr227 provides a ligand contact to shikimate. Gly248 serves as a coordination point for NADP(+).

Belongs to the shikimate dehydrogenase family. In terms of assembly, homodimer.

It carries out the reaction shikimate + NADP(+) = 3-dehydroshikimate + NADPH + H(+). The protein operates within metabolic intermediate biosynthesis; chorismate biosynthesis; chorismate from D-erythrose 4-phosphate and phosphoenolpyruvate: step 4/7. In terms of biological role, involved in the biosynthesis of the chorismate, which leads to the biosynthesis of aromatic amino acids. Catalyzes the reversible NADPH linked reduction of 3-dehydroshikimate (DHSA) to yield shikimate (SA). This Dehalococcoides mccartyi (strain CBDB1) protein is Shikimate dehydrogenase (NADP(+)).